A 1065-amino-acid polypeptide reads, in one-letter code: Leucine-rich repeats and immunoglobulin-like domains protein 2 (1065 aa).

The signal sequence occupies residues 1–40; sequence MAPAPLGVPEEQLLGCRSRVLSRLLFIAQTALLLLPAAGA. One can recognise an LRRNT domain in the interval 41–75; the sequence is GLCPAPCSCRIPLLDCSRRKLPAPSWRALSGLLPP. At 41–807 the chain is on the extracellular side; that stretch reads GLCPAPCSCR…HEDDGWTTVG (767 aa). 15 LRR repeats span residues 76–97, 98–119, 121–142, 145–166, 168–189, 193–214, 216–237, 240–261, 264–285, 288–309, 312–333, 336–357, 360–382, 387–408, and 411–432; these read DTAI…LESQ, TLQE…GEPT, NITL…ALQF, ALES…SFPR, QLKY…CFDN, SLLV…IFKL, HLQF…TFQG, SLRS…AFFG, NMEE…WLYG, MLQQ…AWEF, RLSE…AFVG, LLER…VFRF, NLQT…SEAF, SLTK…AFIG, and SLEH…AFSQ. N-linked (GlcNAc...) asparagine glycosylation occurs at Asn91. Residue Asn121 is glycosylated (N-linked (GlcNAc...) asparagine). N-linked (GlcNAc...) asparagine glycosylation is found at Asn173 and Asn189. An N-linked (GlcNAc...) asparagine glycan is attached at Asn274. Asn441, Asn468, Asn514, Asn571, and Asn589 each carry an N-linked (GlcNAc...) asparagine glycan. An LRRCT domain is found at 443-494; that stretch reads SSLLCDCHLKWLLQWLVDNNFQHSVNVSCAHPEWLAGQSILNVDLKDFVCDD. Ig-like C2-type domains lie at 498 to 597, 602 to 691, and 696 to 785; these read PQIR…AKLT, PSFL…ASLT, and PSFI…NVIS. An intrachain disulfide couples Cys519 to Cys580. A disulfide bond links Cys623 and Cys675. 2 N-linked (GlcNAc...) asparagine glycosylation sites follow: Asn687 and Asn728. An intrachain disulfide couples Cys717 to Cys766. Residues 808–828 form a helical membrane-spanning segment; the sequence is IVIIVVVCCVVGTSLIWVIVI. The Cytoplasmic portion of the chain corresponds to 829–1065; that stretch reads YHMRRKNEDY…RNIQDGSEGT (237 aa). Residue Tyr906 is modified to Phosphotyrosine. 2 disordered regions span residues 963–990 and 1003–1040; these read SANR…QMSG and ELGL…ASSM. Over residues 974–983 the composition is skewed to basic and acidic residues; sequence NHERISEKKL. Residues 1013 to 1024 are compositionally biased toward polar residues; the sequence is QQPVHESPQLHQ.

As to expression, detected in all tissues analyzed.

Its subcellular location is the cell membrane. The protein resides in the cytoplasm. This is Leucine-rich repeats and immunoglobulin-like domains protein 2 (LRIG2) from Homo sapiens (Human).